The sequence spans 279 residues: Elongation factor Ts (279 aa).

The tract at residues 80 to 83 (TDFV) is involved in Mg(2+) ion dislocation from EF-Tu.

The protein belongs to the EF-Ts family.

The protein localises to the cytoplasm. In terms of biological role, associates with the EF-Tu.GDP complex and induces the exchange of GDP to GTP. It remains bound to the aminoacyl-tRNA.EF-Tu.GTP complex up to the GTP hydrolysis stage on the ribosome. The protein is Elongation factor Ts of Borreliella afzelii (strain PKo) (Borrelia afzelii).